We begin with the raw amino-acid sequence, 372 residues long: Glutamate 5-kinase (372 aa).

Lys-14 contributes to the ATP binding site. Residues Ser-54, Asp-141, and Asn-153 each coordinate substrate. 173–174 (TD) is an ATP binding site. A PUA domain is found at 280–358 (RGHVVIDAGA…GEIETVLGYM (79 aa)).

The protein belongs to the glutamate 5-kinase family.

Its subcellular location is the cytoplasm. The catalysed reaction is L-glutamate + ATP = L-glutamyl 5-phosphate + ADP. It participates in amino-acid biosynthesis; L-proline biosynthesis; L-glutamate 5-semialdehyde from L-glutamate: step 1/2. Catalyzes the transfer of a phosphate group to glutamate to form L-glutamate 5-phosphate. The sequence is that of Glutamate 5-kinase from Burkholderia orbicola (strain AU 1054).